A 1012-amino-acid polypeptide reads, in one-letter code: MVQAPMISVPLKATSEIDWVAPLKNYIRNTYGDDPERYAEECATLNRLRQDMRGAGKDSTSGRDLLYRYYGQLELLDLRFPVDEKNIKISFTWFDAFTHKPTAQYSLAFEKASIIFNISAVLSCHAAHQLRTEEAGLKTAYHSFQASAGMFTYINENFLHAPSSDLSRETVKTLISIMLAQAQEVFLEKQIADQKKNGLLAKLSSQAAALYAQAVEGVQENVTKAIFEKVWLSVVQIKLNFMNSLAQYYQALADEDANSYGVAIARLEIAQGLAKEANKMAHSFPTSVPPNSNLTSDCGHILADATKRHLATVKEKLEELNKENDMIYHQPVPAEASVAPVPKLPAAKPIPVSELYAGQDIQRITGPDLFAKIVPLAVTESASLYDEEKAKLVRAETERVETANSEMAASLDYLRLPGALQVLKGGFDQDILPDEDFRTWCVDVADHESPHRIFEYLHTEKQAISTILDKSSRQLDMEESVCEKMRSKYDAEWTQQPSSRLTTTLRTDIRRYREALEVAAKSDGQLATKLRANETELDEMRQAAQHGEIDELFQRAVRKSRKSNPNSPATVEPNLLEADFDDGGPSVVEQIQKVEDILKKLSLVKKERLQVLQDLKQKAHSDDISQILILNKKSIANYEQQLFQQELEKFRPHQNRLVQASHKQAALMRELTVTFNNLLQDKRVRADQSRYESVQRSRTSVINKYKRAYQEFLDLEAGLQSAKNWYKDMRQEAESLEKNVEAFVNNRRAEGAQLLNQIEQDRAANKSSHAALEQERLKNLMERMSMDPSPTSPKPSSGSGGRPTPAPLSFAPAAVSNTPLSAYQKSNFSTQYPASPPATQVPHNPGGQQQTPYQQYNPSSLGRIPGPASPPPNQTSFNIGPGRHPASPPPTQTSFAQSRPYSLTTYGNPSALNPQGGQPQQSQPGGYVPPGFVPPPPPPGPPPLGPQQTVHYGGNEYYAGAMGNPNIGRPGSGQQGPQGQQGGWGQPPPQQQLYQQQGGGGGDPWAGLSAWK.

Residues 5-407 enclose the BRO1 domain; the sequence is PMISVPLKAT…ERVETANSEM (403 aa). Residues 301–330 adopt a coiled-coil conformation; sequence ILADATKRHLATVKEKLEELNKENDMIYHQ. The tract at residues 558–578 is disordered; the sequence is RKSRKSNPNSPATVEPNLLEA. Residues 719–775 are a coiled coil; it reads LQSAKNWYKDMRQEAESLEKNVEAFVNNRRAEGAQLLNQIEQDRAANKSSHAALEQE. 2 disordered regions span residues 784-812 and 827-1012; these read MSMD…SFAP and NFST…SAWK. A compositionally biased stretch (polar residues) spans 827–842; the sequence is NFSTQYPASPPATQVP. The span at 844 to 857 shows a compositional bias: low complexity; the sequence is NPGGQQQTPYQQYN. Residues 892–913 are compositionally biased toward polar residues; sequence QTSFAQSRPYSLTTYGNPSALN. Positions 914–930 are enriched in low complexity; it reads PQGGQPQQSQPGGYVPP. Residues 931-945 are compositionally biased toward pro residues; the sequence is GFVPPPPPPGPPPLG. Over residues 970–985 the composition is skewed to gly residues; it reads PGSGQQGPQGQQGGWG.

It belongs to the BRO1 family.

Its subcellular location is the cytoplasm. The protein localises to the endosome. In terms of biological role, involved in concentration and sorting of cargo proteins of the multivesicular body (MVB) for incorporation into intralumenal vesicles. The protein is Vacuolar protein-sorting protein bro-1 (bro-1) of Neurospora crassa (strain ATCC 24698 / 74-OR23-1A / CBS 708.71 / DSM 1257 / FGSC 987).